We begin with the raw amino-acid sequence, 851 residues long: DNA mismatch repair protein MutS (851 aa).

Residue glycine 602–serine 609 participates in ATP binding.

This sequence belongs to the DNA mismatch repair MutS family.

Its function is as follows. This protein is involved in the repair of mismatches in DNA. It is possible that it carries out the mismatch recognition step. This protein has a weak ATPase activity. In Streptococcus pyogenes serotype M28 (strain MGAS6180), this protein is DNA mismatch repair protein MutS.